Reading from the N-terminus, the 264-residue chain is Thymidylate synthase (264 aa).

R21 contacts dUMP. Residue H51 coordinates (6R)-5,10-methylene-5,6,7,8-tetrahydrofolate. A dUMP-binding site is contributed by 126–127 (RR). C146 (nucleophile) is an active-site residue. Residues 166–169 (RSAD), N177, and 207–209 (HIY) contribute to the dUMP site. D169 contributes to the (6R)-5,10-methylene-5,6,7,8-tetrahydrofolate binding site. S263 is a binding site for (6R)-5,10-methylene-5,6,7,8-tetrahydrofolate.

This sequence belongs to the thymidylate synthase family. Bacterial-type ThyA subfamily. Homodimer.

It is found in the cytoplasm. It carries out the reaction dUMP + (6R)-5,10-methylene-5,6,7,8-tetrahydrofolate = 7,8-dihydrofolate + dTMP. It functions in the pathway pyrimidine metabolism; dTTP biosynthesis. Functionally, catalyzes the reductive methylation of 2'-deoxyuridine-5'-monophosphate (dUMP) to 2'-deoxythymidine-5'-monophosphate (dTMP) while utilizing 5,10-methylenetetrahydrofolate (mTHF) as the methyl donor and reductant in the reaction, yielding dihydrofolate (DHF) as a by-product. This enzymatic reaction provides an intracellular de novo source of dTMP, an essential precursor for DNA biosynthesis. This chain is Thymidylate synthase, found in Exiguobacterium sp. (strain ATCC BAA-1283 / AT1b).